The sequence spans 185 residues: MEVHGKPKASPSCSSPTRDSSGVPVSKELLTAGSDGRGGIWDRLLINSQPKSRKTSTLQTVRIERSPLLDQVQTFLPQMARANEKLRKEMAAAPPGRFNIENIDGPHSKVIQMDVALFEMNQSDSKEVDSSEESSQDSSENSSESEDEDDSIPSEVTIDNIKLPNSEGGKGKIEVLDSPASKKKK.

The disordered stretch occupies residues 1-40 (MEVHGKPKASPSCSSPTRDSSGVPVSKELLTAGSDGRGGI). Positions 10–21 (SPSCSSPTRDSS) are enriched in low complexity. Phosphoserine occurs at positions 34 and 66. The segment at 118-185 (FEMNQSDSKE…LDSPASKKKK (68 aa)) is disordered. The segment covering 143–152 (SESEDEDDSI) has biased composition (acidic residues). S178 bears the Phosphoserine mark.

Interacts with NOP58, RUVBL1 and RUVBL2; the interactions are direct and NOPCHAP1 bridges the association of NOP58 with RUVBL1:RUVBL2 even in absence of snoRNAs. The interactions with RUVBL1 and RUVBL2 are disrupted upon ATP binding.

Its subcellular location is the nucleus. Its function is as follows. Client-loading PAQosome/R2TP complex cofactor that selects NOP58 to promote box C/D small nucleolar ribonucleoprotein (snoRNP) assembly. Acts as a bridge between NOP58 and the R2TP complex via RUVBL1:RUVBL2. This is NOP protein chaperone 1 from Homo sapiens (Human).